A 141-amino-acid chain; its full sequence is MQHARKKFRVGRTSSHNRCMLANMLKSLIHNERIETTLPKAKELRRHADKMITLAKKNTLAARRLAVGRLMVRYNTLTSKEARQVKAGDLSAYNVDRRVIGKLFDVLATRFSSRNGGYTRILKLQNRVGDNAQKCIIEFLA.

The protein belongs to the bacterial ribosomal protein bL17 family. As to quaternary structure, part of the 50S ribosomal subunit. Contacts protein L32.

This chain is Large ribosomal subunit protein bL17, found in Chlamydia trachomatis serovar D (strain ATCC VR-885 / DSM 19411 / UW-3/Cx).